The sequence spans 638 residues: Threonine--tRNA ligase (638 aa).

Residues 1 to 61 (MPVITLPDGS…SVDGKLQIIT (61 aa)) form the TGS domain. The segment at 243–534 (DHRKIGKTQD…LTEEYAGFFP (292 aa)) is catalytic. The Zn(2+) site is built by Cys334, His385, and His511.

This sequence belongs to the class-II aminoacyl-tRNA synthetase family. In terms of assembly, homodimer. Zn(2+) is required as a cofactor.

It is found in the cytoplasm. The catalysed reaction is tRNA(Thr) + L-threonine + ATP = L-threonyl-tRNA(Thr) + AMP + diphosphate + H(+). In terms of biological role, catalyzes the attachment of threonine to tRNA(Thr) in a two-step reaction: L-threonine is first activated by ATP to form Thr-AMP and then transferred to the acceptor end of tRNA(Thr). Also edits incorrectly charged L-seryl-tRNA(Thr). The polypeptide is Threonine--tRNA ligase (Hamiltonella defensa subsp. Acyrthosiphon pisum (strain 5AT)).